The primary structure comprises 375 residues: Aminomethyltransferase (375 aa).

This sequence belongs to the GcvT family. The glycine cleavage system is composed of four proteins: P, T, L and H.

The enzyme catalyses N(6)-[(R)-S(8)-aminomethyldihydrolipoyl]-L-lysyl-[protein] + (6S)-5,6,7,8-tetrahydrofolate = N(6)-[(R)-dihydrolipoyl]-L-lysyl-[protein] + (6R)-5,10-methylene-5,6,7,8-tetrahydrofolate + NH4(+). The glycine cleavage system catalyzes the degradation of glycine. The chain is Aminomethyltransferase from Cupriavidus metallidurans (strain ATCC 43123 / DSM 2839 / NBRC 102507 / CH34) (Ralstonia metallidurans).